The following is a 390-amino-acid chain: Substance-K receptor (390 aa).

Over 1–32 (MGTRAIVSDANILSGLESNATGVTAFSMPGWQ) the chain is Extracellular. N19 carries N-linked (GlcNAc...) asparagine glycosylation. A helical transmembrane segment spans residues 33–56 (LALWATAYLALVLVAVTGNATVIW). Over 57–69 (IILAHERMRTVTN) the chain is Cytoplasmic. A helical membrane pass occupies residues 70–90 (YFIINLALADLCMAAFNATFN). Topologically, residues 91–107 (FIYASHNIWYFGRAFCY) are extracellular. Residues C106 and C181 are joined by a disulfide bond. The helical transmembrane segment at 108–129 (FQNLFPITAMFVSIYSMTAIAA) threads the bilayer. Over 130–149 (DRYMAIVHPFQPRLSAPSTK) the chain is Cytoplasmic. Residues 150–170 (AIIAGIWLVALALASPQCFYS) form a helical membrane-spanning segment. At 171 to 196 (TITVDEGATKCVVAWPNDNGGKMLLL) the chain is on the extracellular side. A helical transmembrane segment spans residues 197-218 (YHLVVFVLIYFLPLLVMFGAYS). Over 219 to 251 (VIGLTLWKRAVPRHQAHGANLRHLQAKKKFVKA) the chain is Cytoplasmic. Residues 252 to 272 (MVLVVLTFAICWLPYHLYFIL) form a helical membrane-spanning segment. The Extracellular segment spans residues 273–290 (GTFQEDIYYHKFIQQVYL). A helical membrane pass occupies residues 291–310 (ALFWLAMSSTMYNPIIYCCL). The Cytoplasmic segment spans residues 311 to 390 (NHRFRSGFRL…PAGPICKAQA (80 aa)). The S-palmitoyl cysteine moiety is linked to residue C324. The tract at residues 365–390 (HSEATNGQVGSPQDGEPAGPICKAQA) is disordered. The span at 366–375 (SEATNGQVGS) shows a compositional bias: polar residues.

Belongs to the G-protein coupled receptor 1 family.

The protein resides in the cell membrane. In terms of biological role, this is a receptor for the tachykinin neuropeptide substance K (neurokinin A). It is associated with G proteins that activate a phosphatidylinositol-calcium second messenger system. The rank order of affinity of this receptor to tachykinins is: substance K &gt; neuromedin-K &gt; substance P. This is Substance-K receptor (Tacr2) from Rattus norvegicus (Rat).